The primary structure comprises 1571 residues: Paternally-expressed gene 3 protein (1571 aa).

2 disordered regions span residues 1–120 (MYHH…NPIQ) and 137–241 (AEDD…QERG). 5 stretches are compositionally biased toward basic and acidic residues: residues 35–56 (GSERDLERRGRSRDVEPRDRWP), 80–99 (FGLDRDDDRRSMDYESRSQD), 169–186 (PEAKKPSHRRGICEDESS), 193–215 (KFIKDVARNPKSGRARELNERPP), and 223–241 (DNWKDSSSSRRESVIQERG). The segment at 199–265 (ARNPKSGRAR…DLASRSRALE (67 aa)) is 10 X 5 AA repeat of P-H-X-X-E. The segment at 199–265 (ARNPKSGRAR…DLASRSRALE (67 aa)) is 3 X 5 AA repeat of P-H-D-D-K. C2H2-type zinc fingers lie at residues 325-347 (YVCDECGRQFSVISEFVEHQIMH), 378-400 (FECKECGETFSRSAALAEHRQIH), 436-458 (YECKVCKETFLHSSALIEHQKIH), and 520-542 (YECKVCGESFLHLSSLREHQKIH). A disordered region spans residues 456 to 495 (KIHGRGNSDDRDNERERERDRLRARAREQRERERERERER). 3 disordered regions span residues 585-649 (ALMG…LKFP), 672-713 (EAQK…TYEG), and 764-820 (REDA…AKKK). A compositionally biased stretch (basic and acidic residues) spans 592 to 614 (SSEHQKNRSRRNFFEGRGFEKPF). Polar residues-rich tracts occupy residues 770–781 (GSSSSNYHTPNV) and 799–808 (DVTFSVPSSS). Positions 809 to 820 (VREHQKARAKKK) are enriched in basic and acidic residues. The segment at 850-872 (FECQECGEAFARRSELIEHQKIH) adopts a C2H2-type 5 zinc-finger fold. The tract at residues 937–1070 (FNAEEPHDKE…ESHGQEKVED (134 aa)) is disordered. The span at 940-1070 (EEPHDKETHG…ESHGQEKVED (131 aa)) shows a compositional bias: basic and acidic residues. 13 repeat units span residues 942 to 946 (PHDKE), 967 to 971 (PHGDE), 987 to 991 (PHDDK), 992 to 996 (PHGQE), 997 to 1001 (PHDDK), 1002 to 1006 (PHGQE), 1007 to 1011 (PHDDK), 1012 to 1016 (PHGQE), 1017 to 1021 (PHGDE), 1022 to 1026 (PHGQE), 1027 to 1031 (PHGDE), 1032 to 1036 (PHDKE), and 1047 to 1051 (PHSEE). 4 C2H2-type zinc fingers span residues 1091–1113 (YECQDCGLGFTDLNDLTSHQDTH), 1147–1169 (YECPKCGESFIHSSLLFEHQRVH), 1209–1231 (IRCRQCGQGFIHSSALNEHMRQH), and 1266–1289 (FECTICGECFFTAKQLGDHHTKVH). The segment at 1317 to 1339 (YECKDCGQSFLDDTVIAERMVFH) adopts a C2H2-type 10; degenerate zinc-finger fold. Residues 1373–1487 (NAEAAEPEVE…DQEIEVEEPY (115 aa)) form a disordered region. Composition is skewed to acidic residues over residues 1377-1397 (AEPEVEAAEPEVEAAEPEVEA), 1405-1418 (EGPDGEAAEPDGEA), and 1431-1485 (DADE…EVEE). C2H2-type zinc fingers lie at residues 1488–1510 (YNCHECAETFASSSAFGEHLKSH) and 1547–1569 (FKCDVCGQLFNDRLSLARHQNSH).

This sequence belongs to the krueppel C2H2-type zinc-finger protein family. As to quaternary structure, homodimer. Interacts with SIAH1A and SIAH2. Interacts with TRAF2. As to expression, brain, glial cells, neurons, skeletal muscle, uterus and placenta. In the placenta it is found in all trophoblast cells.

It localises to the nucleus. The protein resides in the cytoplasm. Functionally, induces apoptosis in cooperation with SIAH1A. Acts as a mediator between p53/TP53 and BAX in a neuronal death pathway that is activated by DNA damage. Acts synergistically with TRAF2 and inhibits TNF induced apoptosis through activation of NF-kappa-B. Plays a role in regulating maternal behavior and offspring growth. The sequence is that of Paternally-expressed gene 3 protein (Peg3) from Mus musculus (Mouse).